The following is a 384-amino-acid chain: tRNA-specific 2-thiouridylase MnmA (384 aa).

ATP is bound by residues 9–16 (GMSGGVDS) and Met35. Positions 95 to 97 (NPD) are interaction with target base in tRNA. Cys100 serves as the catalytic Nucleophile. Residues Cys100 and Cys196 are joined by a disulfide bond. Position 124 (Gly124) interacts with ATP. The segment at 146 to 148 (KDQ) is interaction with tRNA. The active-site Cysteine persulfide intermediate is Cys196. The interaction with tRNA stretch occupies residues 308–309 (RY).

This sequence belongs to the MnmA/TRMU family.

The protein resides in the cytoplasm. The enzyme catalyses S-sulfanyl-L-cysteinyl-[protein] + uridine(34) in tRNA + AH2 + ATP = 2-thiouridine(34) in tRNA + L-cysteinyl-[protein] + A + AMP + diphosphate + H(+). Catalyzes the 2-thiolation of uridine at the wobble position (U34) of tRNA, leading to the formation of s(2)U34. This Burkholderia ambifaria (strain ATCC BAA-244 / DSM 16087 / CCUG 44356 / LMG 19182 / AMMD) (Burkholderia cepacia (strain AMMD)) protein is tRNA-specific 2-thiouridylase MnmA.